We begin with the raw amino-acid sequence, 296 residues long: Stanniocalcin-2 (296 aa).

A signal peptide spans 1-24 (MCAERLGQFVTLALVFATLDPAQG). Residues 21 to 44 (PAQGTDSTNPPEGPQDRSSQQKGR) are disordered. A compositionally biased stretch (polar residues) spans 24 to 44 (GTDSTNPPEGPQDRSSQQKGR). N-linked (GlcNAc...) asparagine glycosylation occurs at Asn-73. The tract at residues 218–296 (PPTAAPEHQP…EQSEYSDIRR (79 aa)) is disordered. Positions 240–258 (RDTDHHLTANRGAKGERGS) are enriched in basic and acidic residues. Over residues 272–282 (GQSAQGPSGSS) the composition is skewed to low complexity.

Belongs to the stanniocalcin family. In terms of assembly, homodimer; disulfide-linked. As to expression, found in a variety of tissues including skeletal muscle, small intestine, kidney, liver and brain.

It localises to the secreted. Its function is as follows. Has an anti-hypocalcemic action on calcium and phosphate homeostasis. This is Stanniocalcin-2 (Stc2) from Mus musculus (Mouse).